The chain runs to 318 residues: Olfactory receptor 13C5 (318 aa).

Over 1–25 the chain is Extracellular; it reads MEWENHTILVEFFLKGLSGHPRLEL. Asparagine 5 carries N-linked (GlcNAc...) asparagine glycosylation. A helical membrane pass occupies residues 26-46; that stretch reads LFFVLIFIMYVVILLGNGTLI. Residues 47–54 lie on the Cytoplasmic side of the membrane; sequence LISILDPH. The chain crosses the membrane as a helical span at residues 55-75; the sequence is LHTPMYFFLGNLSFLDICYTT. Residues 76 to 99 lie on the Extracellular side of the membrane; the sequence is TSIPSTLVSFLSERKTISLSGCAV. Cysteine 97 and cysteine 189 are disulfide-bonded. Residues 100–120 traverse the membrane as a helical segment; that stretch reads QMFLSLAMGTTECVLLGVMAF. At 121-139 the chain is on the cytoplasmic side; the sequence is DRYVAICNPLRYPIIMSKD. The chain crosses the membrane as a helical span at residues 140–160; that stretch reads AYVPMAAGSWIIGAVNSAVQT. Residues 161-197 lie on the Extracellular side of the membrane; that stretch reads VFVVQLPFCRNNIINHFTCEILAVMKLACADISGNEF. The chain crosses the membrane as a helical span at residues 198-217; the sequence is ILLVTTTLFLLTPLLLIIVS. At 218–237 the chain is on the cytoplasmic side; the sequence is YTLIILSIFKISSSEGRSKP. Residues 238–258 traverse the membrane as a helical segment; that stretch reads SSTCSARLTVVITFCGTIFLM. Over 259 to 277 the chain is Extracellular; the sequence is YMKPKSQETLNSDDLDATD. A helical transmembrane segment spans residues 278–298; that stretch reads KLIFIFYRVMTPMMNPLIYSL. Over 299 to 318 the chain is Cytoplasmic; the sequence is RNKDVKEAVKHLLRRKNFNK.

This sequence belongs to the G-protein coupled receptor 1 family.

The protein resides in the cell membrane. Its function is as follows. Odorant receptor. The chain is Olfactory receptor 13C5 (OR13C5) from Homo sapiens (Human).